The primary structure comprises 721 residues: Mitogen-activated protein kinase 6 (721 aa).

Positions 20 to 316 constitute a Protein kinase domain; it reads YMDLKPLGCG…AEEALSHPYM (297 aa). Residues 26 to 34 and K49 each bind ATP; that span reads LGCGGNGLV. The active-site Proton acceptor is the D152. T626 carries the phosphothreonine modification. A TXY motif is present at residues 626 to 628; that stretch reads TSY. Position 628 is a phosphotyrosine (Y628).

It belongs to the protein kinase superfamily. CMGC Ser/Thr protein kinase family. MAP kinase subfamily. Requires Mg(2+) as cofactor. Dually phosphorylated on Thr-626 and Tyr-628, which activates the enzyme.

The enzyme catalyses L-seryl-[protein] + ATP = O-phospho-L-seryl-[protein] + ADP + H(+). It catalyses the reaction L-threonyl-[protein] + ATP = O-phospho-L-threonyl-[protein] + ADP + H(+). With respect to regulation, activated by threonine and tyrosine phosphorylation. Phosphorylates microtubule-associated protein 2 (MAP2). May promote entry in the cell cycle. The sequence is that of Mitogen-activated protein kinase 6 (MAPK6) from Gallus gallus (Chicken).